A 583-amino-acid chain; its full sequence is Multidrug transporter QDR2 (583 aa).

Positions 23-46 are disordered; sequence EKYDGPDLSEVDSEDNDKMIKTNE. Asn-60 carries N-linked (GlcNAc...) asparagine glycosylation. A helical transmembrane segment spans residues 88–108; it reads AYTGLFSTMAGAIYYPVLSVI. N-linked (GlcNAc...) asparagine glycosylation is present at Asn-120. Helical transmembrane passes span 121 to 141, 148 to 168, 178 to 198, 208 to 228, and 238 to 258; these read ITVV…GGLA, PVVL…ACAQ, CLQA…IGDV, VGYI…IGAG, and IFWF…IMLP. A glycan (N-linked (GlcNAc...) asparagine) is linked at Asn-267. Helical transmembrane passes span 323–342 and 354–374; these read ILLV…QTAL and VAKI…SIVT. Asn-380 is a glycosylation site (N-linked (GlcNAc...) asparagine). 4 helical membrane passes run 432–452, 458–478, 493–513, and 524–544; these read HAAF…GWCI, LASV…ILTF, TATG…IGCL, and GVFT…FYLL.

Belongs to the major facilitator superfamily. CAR1 family.

Its subcellular location is the cell membrane. Multidrug resistance transporter involved in resistance to the antifungal drugs miconazole, tioconazole, clotrimazole, and ketoconazole; as well as to quinidine. Decreases the intracellular accumulation of clotrimazole in and plays a role in the extrusion of this antifungal from preloaded cells. This chain is Multidrug transporter QDR2, found in Candida glabrata (strain ATCC 2001 / BCRC 20586 / JCM 3761 / NBRC 0622 / NRRL Y-65 / CBS 138) (Yeast).